The following is a 288-amino-acid chain: Nucleotide-binding protein PM0169 (288 aa).

8-15 (GHSGAGKS) is an ATP binding site. 56–59 (DIRN) is a binding site for GTP.

Belongs to the RapZ-like family.

Displays ATPase and GTPase activities. The protein is Nucleotide-binding protein PM0169 of Pasteurella multocida (strain Pm70).